Reading from the N-terminus, the 97-residue chain is Large ribosomal subunit protein bL27 (97 aa).

Residues 1–23 (MAHKKGASSSRNGRDSTSKRLGV) form a disordered region.

The protein belongs to the bacterial ribosomal protein bL27 family.

This chain is Large ribosomal subunit protein bL27, found in Acidothermus cellulolyticus (strain ATCC 43068 / DSM 8971 / 11B).